We begin with the raw amino-acid sequence, 383 residues long: MSRHEGVSCDACLKGNFRGRRYKCLICYDYDLCASCYESGATTTRHTTEHPMQCILTRVDFDLYYGGEAFSVEQPQSFTCPYCGKMGYTETSLQEHVTSEHAETSTEVICPICAALPGGDPNHVTDDFAAHLTLEHRAPRDLDESSGVRHVRRMFHPGRGLGGPRARRTNMHFTSSSTGGLSSSQSSSYSPSNREAMDPIAELLSQLSGVRRSAGGQLNSSGPSASQLQQLQMQLQLERQQAQAARQQLETARNATRQRSNPSNISASIPPPSTATNTAMTESNPLASHSSQFLLTRLNEPKMSEAERQALESERADRSLFVQELLLSTLMREESSSSDEDERRDFADFGAMGCVDIMPLDVALESLNLKESSTGKEPPPPPL.

The ZZ-type zinc finger occupies 4–60; sequence HEGVSCDACLKGNFRGRRYKCLICYDYDLCASCYESGATTTRHTTEHPMQCILTRVD. Zn(2+) is bound by residues Cys-9, Cys-12, Cys-24, Cys-27, Cys-33, Cys-36, His-46, and His-50. The segment at 78–101 adopts a C2H2-type zinc-finger fold; the sequence is FTCPYCGKMGYTETSLQEHVTSEH. 2 disordered regions span residues 141 to 194 and 242 to 289; these read DLDE…PSNR and AQAA…LASH. Low complexity-rich tracts occupy residues 175–192 and 260–279; these read SSSTGGLSSSQSSSYSPS and SNPSNISASIPPPSTATNTA. Positions 224 to 261 form a coiled coil; sequence SASQLQQLQMQLQLERQQAQAARQQLETARNATRQRSN. Positions 280-289 are enriched in polar residues; that stretch reads MTESNPLASH.

It belongs to the KCMF1 family. Component of the SIFI complex, composed of kcmf1, ubr4 and calmodulin.

The protein localises to the cytoplasm. It is found in the late endosome. Its subcellular location is the lysosome. The enzyme catalyses S-ubiquitinyl-[E2 ubiquitin-conjugating enzyme]-L-cysteine + [acceptor protein]-L-lysine = [E2 ubiquitin-conjugating enzyme]-L-cysteine + N(6)-ubiquitinyl-[acceptor protein]-L-lysine.. Its pathway is protein modification; protein ubiquitination. In terms of biological role, E3 ubiquitin-protein ligase which accepts ubiquitin from an E2 ubiquitin-conjugating enzyme and then transfers it to targeted substrates, promoting their degradation by the proteasome. Together with UBR4, component of the N-end rule pathway: ubiquitinates proteins bearing specific N-terminal residues that are destabilizing according to the N-end rule, leading to their degradation. Does not ubiquitinate proteins that are acetylated at the N-terminus. Together with ubr4, part of a protein quality control pathway that catalyzes ubiquitination and degradation of proteins that have been oxidized in response to reactive oxygen species (ROS): recognizes proteins with an Arg-CysO3(H) degron at the N-terminus, and mediates assembly of heterotypic 'Lys-63'-/'Lys-27'-linked branched ubiquitin chains on oxidized proteins, leading to their degradation by autophagy. Catalytic component of the SIFI complex, a multiprotein complex required to inhibit the mitochondrial stress response after a specific stress event has been resolved: ubiquitinates and degrades (1) components of the HRI-mediated signaling of the integrated stress response, such as dele1 and eif2ak1/hri, as well as (2) unimported mitochondrial precursors. Within the SIFI complex, ubr4 initiates ubiquitin chain that are further elongated or branched by kcmf1. The sequence is that of E3 ubiquitin-protein ligase KCMF1 (kcmf1) from Danio rerio (Zebrafish).